Here is a 287-residue protein sequence, read N- to C-terminus: Formamidopyrimidine-DNA glycosylase (287 aa).

Residue proline 2 is the Schiff-base intermediate with DNA of the active site. Glutamate 3 serves as the catalytic Proton donor. The Proton donor; for beta-elimination activity role is filled by lysine 58. Positions 104, 123, and 166 each coordinate DNA. An FPG-type zinc finger spans residues 251-287 (RTYDREGQPCRNDGCRGVIGREVQAGRSTFYCPVCQR). Arginine 277 functions as the Proton donor; for delta-elimination activity in the catalytic mechanism.

The protein belongs to the FPG family. As to quaternary structure, monomer. It depends on Zn(2+) as a cofactor.

The catalysed reaction is Hydrolysis of DNA containing ring-opened 7-methylguanine residues, releasing 2,6-diamino-4-hydroxy-5-(N-methyl)formamidopyrimidine.. It carries out the reaction 2'-deoxyribonucleotide-(2'-deoxyribose 5'-phosphate)-2'-deoxyribonucleotide-DNA = a 3'-end 2'-deoxyribonucleotide-(2,3-dehydro-2,3-deoxyribose 5'-phosphate)-DNA + a 5'-end 5'-phospho-2'-deoxyribonucleoside-DNA + H(+). Functionally, involved in base excision repair of DNA damaged by oxidation or by mutagenic agents. Acts as a DNA glycosylase that recognizes and removes damaged bases. Has a preference for oxidized purines, such as 7,8-dihydro-8-oxoguanine (8-oxoG). Has AP (apurinic/apyrimidinic) lyase activity and introduces nicks in the DNA strand. Cleaves the DNA backbone by beta-delta elimination to generate a single-strand break at the site of the removed base with both 3'- and 5'-phosphates. The chain is Formamidopyrimidine-DNA glycosylase from Phenylobacterium zucineum (strain HLK1).